We begin with the raw amino-acid sequence, 129 residues long: Small ribosomal subunit protein uS11 (129 aa).

It belongs to the universal ribosomal protein uS11 family. In terms of assembly, part of the 30S ribosomal subunit. Interacts with proteins S7 and S18. Binds to IF-3.

Its function is as follows. Located on the platform of the 30S subunit, it bridges several disparate RNA helices of the 16S rRNA. Forms part of the Shine-Dalgarno cleft in the 70S ribosome. The sequence is that of Small ribosomal subunit protein uS11 from Novosphingobium aromaticivorans (strain ATCC 700278 / DSM 12444 / CCUG 56034 / CIP 105152 / NBRC 16084 / F199).